We begin with the raw amino-acid sequence, 210 residues long: 3-hexulose-6-phosphate synthase (210 aa).

The protein belongs to the HPS/KGPDC family. HPS subfamily.

It carries out the reaction D-ribulose 5-phosphate + formaldehyde = D-arabino-hex-3-ulose 6-phosphate. It participates in one-carbon metabolism; formaldehyde assimilation via RuMP pathway; D-fructose 6-phosphate from D-ribulose 5-phosphate and formaldehyde: step 1/2. Its function is as follows. Catalyzes the condensation of ribulose 5-phosphate with formaldehyde to form 3-hexulose 6-phosphate. Together with HxlB, may act as a formaldehyde detoxification system. This chain is 3-hexulose-6-phosphate synthase (hxlA), found in Bacillus subtilis (strain 168).